A 232-amino-acid polypeptide reads, in one-letter code: Ribose-5-phosphate isomerase A (232 aa).

Residues 28 to 31, 83 to 86, and 96 to 99 contribute to the substrate site; these read TGST, DGAD, and KGGG. Glu-105 serves as the catalytic Proton acceptor. A substrate-binding site is contributed by Lys-123.

It belongs to the ribose 5-phosphate isomerase family. In terms of assembly, homodimer.

The catalysed reaction is aldehydo-D-ribose 5-phosphate = D-ribulose 5-phosphate. Its pathway is carbohydrate degradation; pentose phosphate pathway; D-ribose 5-phosphate from D-ribulose 5-phosphate (non-oxidative stage): step 1/1. Functionally, catalyzes the reversible conversion of ribose-5-phosphate to ribulose 5-phosphate. The chain is Ribose-5-phosphate isomerase A from Rhodopseudomonas palustris (strain HaA2).